Here is a 287-residue protein sequence, read N- to C-terminus: Survival motor neuron protein (287 aa).

Positions M1–D27 are disordered. Residues P8–D39 are P1 (binding site for GEMIN2). Residue T20 is modified to Phosphothreonine. 2 positions are modified to phosphoserine: S23 and S26. Residue K46 forms a Glycyl lysine isopeptide (Lys-Gly) (interchain with G-Cter in SUMO2) linkage. The disordered stretch occupies residues G52–A83. Over residues S63–K77 the composition is skewed to basic residues. The residue at position 64 (T64) is a Phosphothreonine. Residues Q86 to N146 form the Tudor domain. The segment at K92–K205 is required for interaction with RPP20/POP7. Residues E148–P216 are disordered. Over residues E157–K180 the composition is skewed to polar residues. K205 participates in a covalent cross-link: Glycyl lysine isopeptide (Lys-Gly) (interchain with G-Cter in SUMO2). The tract at residues P234–W261 is P2 (binding site for SM B). The interval G273–N287 is required for interaction with SYNCRIP.

Belongs to the SMN family. Homooligomer; may form higher order homooligomers in the dimer to octamer range. Part of the core SMN complex that contains SMN1, GEMIN2/SIP1, DDX20/GEMIN3, GEMIN4, GEMIN5, GEMIN6, GEMIN7, GEMIN8 and STRAP/UNRIP. Part of the SMN-Sm complex that contains SMN1, GEMIN2/SIP1, DDX20/GEMIN3, GEMIN4, GEMIN5, GEMIN6, GEMIN7, GEMIN8, STRAP/UNRIP and the Sm proteins SNRPB, SNRPD1, SNRPD2, SNRPD3, SNRPE, SNRPF and SNRPG. Component of an import snRNP complex composed of KPNB1, RNUT1, SMN1 and ZNF259. Interacts with DDX20, FBL, NOLA1, RNUT1, SYNCRIP and with several spliceosomal snRNP core Sm proteins, including SNRPB, SNRPD1, SNRPD2, SNRPD3, SNRPE and ILF3. Interacts with GEMIN2; the interaction is direct. Interacts with GEMIN3; the interaction is direct. Interacts with GEMIN8; the interaction is direct. Interacts with SNRPB; the interaction is direct. Interacts (via Tudor domain) with SNRPD1 (via C-terminus); the interaction is direct. Interacts with SNRPD2; the interaction is direct. Interacts (via Tudor domain) with SNRPD3 (via C-terminus); the interaction is direct. Interacts with SNRPE; the interaction is direct. Interacts with OSTF1, LSM10, LSM11 and RPP20/POP7. Interacts (via C-terminal region) with ZPR1 (via C-terminal region). Interacts (via Tudor domain) with COIL. Interacts with SETX; recruits SETX to POLR2A. Interacts with POLR2A (via the C-terminal domain (CTD)). Interacts with PRMT5. Interacts with XRN2. Interacts (via C-terminus) with FMR1 (via C-terminus); the interaction is direct and occurs in a RNA-independent manner. Interacts (via Tudor domain) with SF3B2 ('Arg-508'-methylated form). Interacts with WRAP53/TCAB1. Interacts (via Tudor domain) with ELAVL4 in an RNA-independent manner; the interaction is required for localization of ELAVL4 to RNA granules. Interacts with FRG1.

It localises to the nucleus. The protein localises to the gem. Its subcellular location is the cajal body. It is found in the cytoplasm. The protein resides in the cytoplasmic granule. It localises to the perikaryon. The protein localises to the cell projection. Its subcellular location is the neuron projection. It is found in the axon. The protein resides in the myofibril. It localises to the sarcomere. The protein localises to the z line. Its function is as follows. The SMN complex catalyzes the assembly of small nuclear ribonucleoproteins (snRNPs), the building blocks of the spliceosome, and thereby plays an important role in the splicing of cellular pre-mRNAs. Most spliceosomal snRNPs contain a common set of Sm proteins SNRPB, SNRPD1, SNRPD2, SNRPD3, SNRPE, SNRPF and SNRPG that assemble in a heptameric protein ring on the Sm site of the small nuclear RNA to form the core snRNP (Sm core). In the cytosol, the Sm proteins SNRPD1, SNRPD2, SNRPE, SNRPF and SNRPG are trapped in an inactive 6S pICln-Sm complex by the chaperone CLNS1A that controls the assembly of the core snRNP. To assemble core snRNPs, the SMN complex accepts the trapped 5Sm proteins from CLNS1A forming an intermediate. Binding of snRNA inside 5Sm ultimately triggers eviction of the SMN complex, thereby allowing binding of SNRPD3 and SNRPB to complete assembly of the core snRNP. Within the SMN complex, SMN1 acts as a structural backbone and together with GEMIN2 it gathers the Sm complex subunits. Ensures the correct splicing of U12 intron-containing genes that may be important for normal motor and proprioceptive neurons development. Also required for resolving RNA-DNA hybrids created by RNA polymerase II, that form R-loop in transcription terminal regions, an important step in proper transcription termination. May also play a role in the metabolism of small nucleolar ribonucleoprotein (snoRNPs). In Canis lupus familiaris (Dog), this protein is Survival motor neuron protein (SMN1).